The following is a 271-amino-acid chain: Shikimate dehydrogenase (NADP(+)) (271 aa).

Residues 15–17 (SKS) and Thr-62 each bind shikimate. Catalysis depends on Lys-66, which acts as the Proton acceptor. Glu-78 contributes to the NADP(+) binding site. The shikimate site is built by Asn-87 and Asp-103. Residues 127-131 (GAGGA), 151-156 (NRTQAK), and Met-214 each bind NADP(+). Tyr-216 serves as a coordination point for shikimate. Gly-238 is an NADP(+) binding site.

This sequence belongs to the shikimate dehydrogenase family. As to quaternary structure, homodimer.

The enzyme catalyses shikimate + NADP(+) = 3-dehydroshikimate + NADPH + H(+). The protein operates within metabolic intermediate biosynthesis; chorismate biosynthesis; chorismate from D-erythrose 4-phosphate and phosphoenolpyruvate: step 4/7. In terms of biological role, involved in the biosynthesis of the chorismate, which leads to the biosynthesis of aromatic amino acids. Catalyzes the reversible NADPH linked reduction of 3-dehydroshikimate (DHSA) to yield shikimate (SA). The sequence is that of Shikimate dehydrogenase (NADP(+)) from Shewanella pealeana (strain ATCC 700345 / ANG-SQ1).